We begin with the raw amino-acid sequence, 155 residues long: UPF0303 protein lp_3613 (155 aa).

It belongs to the UPF0303 family.

The chain is UPF0303 protein lp_3613 from Lactiplantibacillus plantarum (strain ATCC BAA-793 / NCIMB 8826 / WCFS1) (Lactobacillus plantarum).